A 393-amino-acid polypeptide reads, in one-letter code: UDP-glucose 6-dehydrogenase (393 aa).

Residues Val11, Asp31, Lys36, Thr85, Thr120, and Glu147 each coordinate NAD(+). Substrate is bound by residues 143-147, Lys199, Asn203, 244-248, and Gly252; these read EFLRE and YNNPS. Tyr254 is an NAD(+) binding site. The active-site Nucleophile is the Cys255. Residue Lys258 coordinates NAD(+). Position 309 (Lys309) interacts with substrate. Arg316 is an NAD(+) binding site.

Belongs to the UDP-glucose/GDP-mannose dehydrogenase family. As to quaternary structure, homodimer.

It carries out the reaction UDP-alpha-D-glucose + 2 NAD(+) + H2O = UDP-alpha-D-glucuronate + 2 NADH + 3 H(+). It participates in nucleotide-sugar biosynthesis; UDP-alpha-D-glucuronate biosynthesis; UDP-alpha-D-glucuronate from UDP-alpha-D-glucose: step 1/1. The protein operates within capsule biogenesis; capsule polysaccharide biosynthesis. Functionally, catalyzes the formation of UDP-glucuronic acid which is required for capsular polysaccharide synthesis. Does not catalyze the formation of glucuronamide moiety of the capsular polysaccharide. This is UDP-glucose 6-dehydrogenase from Campylobacter jejuni subsp. jejuni serotype O:2 (strain ATCC 700819 / NCTC 11168).